The sequence spans 229 residues: ATP-dependent dethiobiotin synthetase BioD (229 aa).

Position 12-17 (12-17) interacts with ATP; sequence GVGKTV. T16 contacts Mg(2+). K37 is an active-site residue. T41 lines the substrate pocket. Residues D53, 112 to 115, and 201 to 203 each bind ATP; these read EGAG and PAG. Mg(2+) is bound by residues D53 and E112.

It belongs to the dethiobiotin synthetase family. In terms of assembly, homodimer. It depends on Mg(2+) as a cofactor.

The protein resides in the cytoplasm. It catalyses the reaction (7R,8S)-7,8-diammoniononanoate + CO2 + ATP = (4R,5S)-dethiobiotin + ADP + phosphate + 3 H(+). Its pathway is cofactor biosynthesis; biotin biosynthesis; biotin from 7,8-diaminononanoate: step 1/2. Functionally, catalyzes a mechanistically unusual reaction, the ATP-dependent insertion of CO2 between the N7 and N8 nitrogen atoms of 7,8-diaminopelargonic acid (DAPA, also called 7,8-diammoniononanoate) to form a ureido ring. The sequence is that of ATP-dependent dethiobiotin synthetase BioD from Mycobacterium sp. (strain KMS).